We begin with the raw amino-acid sequence, 255 residues long: Ribosomal RNA small subunit methyltransferase G 2 (255 aa).

S-adenosyl-L-methionine is bound by residues G90, F95, and R155. Residues 233 to 245 (EDEGEELLMDELS) show a composition bias toward acidic residues. A disordered region spans residues 233–255 (EDEGEELLMDELSNEEKRRWAKY). A compositionally biased stretch (basic and acidic residues) spans 246 to 255 (NEEKRRWAKY).

It belongs to the methyltransferase superfamily. RNA methyltransferase RsmG family.

The protein resides in the cytoplasm. It carries out the reaction guanosine(527) in 16S rRNA + S-adenosyl-L-methionine = N(7)-methylguanosine(527) in 16S rRNA + S-adenosyl-L-homocysteine. In terms of biological role, specifically methylates the N7 position of guanine in position 527 of 16S rRNA. This chain is Ribosomal RNA small subunit methyltransferase G 2, found in Bdellovibrio bacteriovorus (strain ATCC 15356 / DSM 50701 / NCIMB 9529 / HD100).